A 294-amino-acid polypeptide reads, in one-letter code: Acetylglutamate kinase (294 aa).

Substrate contacts are provided by residues 67–68 (GG), arginine 89, and asparagine 191.

It belongs to the acetylglutamate kinase family. ArgB subfamily.

The protein localises to the cytoplasm. The catalysed reaction is N-acetyl-L-glutamate + ATP = N-acetyl-L-glutamyl 5-phosphate + ADP. Its pathway is amino-acid biosynthesis; L-arginine biosynthesis; N(2)-acetyl-L-ornithine from L-glutamate: step 2/4. Its function is as follows. Catalyzes the ATP-dependent phosphorylation of N-acetyl-L-glutamate. In Methylobacillus flagellatus (strain ATCC 51484 / DSM 6875 / VKM B-1610 / KT), this protein is Acetylglutamate kinase.